The following is a 389-amino-acid chain: Phospho-N-acetylmuramoyl-pentapeptide-transferase (389 aa).

10 helical membrane-spanning segments follow: residues 21–41 (FITF…LFFG), 70–90 (GTPT…TLLW), 97–117 (FVWV…VDDY), 134–154 (YMWQ…SVSA), 189–209 (TISY…VIVG), 222–242 (GLAI…AYLT), 259–279 (AGEL…FLWF), 286–306 (VFMG…IAVI), 311–331 (IVLF…MIQV), and 366–386 (QVVV…LSTL).

It belongs to the glycosyltransferase 4 family. MraY subfamily. It depends on Mg(2+) as a cofactor.

It localises to the cell inner membrane. The catalysed reaction is UDP-N-acetyl-alpha-D-muramoyl-L-alanyl-gamma-D-glutamyl-meso-2,6-diaminopimeloyl-D-alanyl-D-alanine + di-trans,octa-cis-undecaprenyl phosphate = di-trans,octa-cis-undecaprenyl diphospho-N-acetyl-alpha-D-muramoyl-L-alanyl-D-glutamyl-meso-2,6-diaminopimeloyl-D-alanyl-D-alanine + UMP. The protein operates within cell wall biogenesis; peptidoglycan biosynthesis. Catalyzes the initial step of the lipid cycle reactions in the biosynthesis of the cell wall peptidoglycan: transfers peptidoglycan precursor phospho-MurNAc-pentapeptide from UDP-MurNAc-pentapeptide onto the lipid carrier undecaprenyl phosphate, yielding undecaprenyl-pyrophosphoryl-MurNAc-pentapeptide, known as lipid I. The chain is Phospho-N-acetylmuramoyl-pentapeptide-transferase from Herminiimonas arsenicoxydans.